The chain runs to 412 residues: Multifunctional CCA protein (412 aa).

Residues Gly-8 and Arg-11 each coordinate ATP. Residues Gly-8 and Arg-11 each contribute to the CTP site. Asp-21 and Asp-23 together coordinate Mg(2+). ATP is bound by residues Arg-91, Arg-137, and Arg-140. Positions 91, 137, and 140 each coordinate CTP. The HD domain maps to 225–326; the sequence is TGIHVMMVID…ADMLQATDAY (102 aa).

This sequence belongs to the tRNA nucleotidyltransferase/poly(A) polymerase family. Bacterial CCA-adding enzyme type 1 subfamily. In terms of assembly, monomer. Can also form homodimers and oligomers. It depends on Mg(2+) as a cofactor. The cofactor is Ni(2+).

It catalyses the reaction a tRNA precursor + 2 CTP + ATP = a tRNA with a 3' CCA end + 3 diphosphate. It carries out the reaction a tRNA with a 3' CCA end + 2 CTP + ATP = a tRNA with a 3' CCACCA end + 3 diphosphate. In terms of biological role, catalyzes the addition and repair of the essential 3'-terminal CCA sequence in tRNAs without using a nucleic acid template. Adds these three nucleotides in the order of C, C, and A to the tRNA nucleotide-73, using CTP and ATP as substrates and producing inorganic pyrophosphate. tRNA 3'-terminal CCA addition is required both for tRNA processing and repair. Also involved in tRNA surveillance by mediating tandem CCA addition to generate a CCACCA at the 3' terminus of unstable tRNAs. While stable tRNAs receive only 3'-terminal CCA, unstable tRNAs are marked with CCACCA and rapidly degraded. In Nitrosomonas eutropha (strain DSM 101675 / C91 / Nm57), this protein is Multifunctional CCA protein.